Consider the following 351-residue polypeptide: Dihydroorotate dehydrogenase (quinone) (351 aa).

FMN contacts are provided by residues 67–71 and T91; that span reads AGFDK. K71 provides a ligand contact to substrate. A substrate-binding site is contributed by 116-120; the sequence is NAMGF. FMN-binding residues include N145 and N178. Position 178 (N178) interacts with substrate. S181 acts as the Nucleophile in catalysis. N183 contacts substrate. FMN is bound by residues K214 and T242. 243–244 is a substrate binding site; the sequence is NT. Residues G262, G291, and 312–313 contribute to the FMN site; that span reads YS.

Belongs to the dihydroorotate dehydrogenase family. Type 2 subfamily. As to quaternary structure, monomer. FMN serves as cofactor.

It localises to the cell membrane. It carries out the reaction (S)-dihydroorotate + a quinone = orotate + a quinol. Its pathway is pyrimidine metabolism; UMP biosynthesis via de novo pathway; orotate from (S)-dihydroorotate (quinone route): step 1/1. Its function is as follows. Catalyzes the conversion of dihydroorotate to orotate with quinone as electron acceptor. In Helicobacter pylori (strain Shi470), this protein is Dihydroorotate dehydrogenase (quinone).